A 196-amino-acid polypeptide reads, in one-letter code: Rac-like GTP-binding protein ARAC5 (196 aa).

16 to 21 (AVGKTC) is a GTP binding site. An Effector region motif is present at residues 35–43 (YVPTVFDNF). GTP contacts are provided by residues 119–121 (KLD) and 159–161 (SSK). The residue at position 193 (Cys193) is a Cysteine methyl ester. The S-geranylgeranyl cysteine moiety is linked to residue Cys193. Residues 194–196 (VFL) constitute a propeptide, removed in mature form.

The protein belongs to the small GTPase superfamily. Rho family. As to quaternary structure, interacts with GDI1 and ROPGEF8 homodimer. Binds to SPK1. In terms of tissue distribution, ubiquitous. Preferentially expressed at the tip of root hairs.

It is found in the cytoplasm. It localises to the membrane. The protein resides in the cell membrane. Its function is as follows. Involved in cell polarity control during the actin-dependent tip growth of root hairs, thus regulating root hair length and root hair initiation. Functionally, inactive GDP-bound Rho GTPases reside in the cytosol, are found in a complex with Rho GDP-dissociation inhibitors (Rho GDIs), and are released from the GDI protein in order to translocate to membranes upon activation. The sequence is that of Rac-like GTP-binding protein ARAC5 from Arabidopsis thaliana (Mouse-ear cress).